The following is a 185-amino-acid chain: Elongation factor P (185 aa).

This sequence belongs to the elongation factor P family.

It is found in the cytoplasm. The protein operates within protein biosynthesis; polypeptide chain elongation. Its function is as follows. Involved in peptide bond synthesis. Stimulates efficient translation and peptide-bond synthesis on native or reconstituted 70S ribosomes in vitro. Probably functions indirectly by altering the affinity of the ribosome for aminoacyl-tRNA, thus increasing their reactivity as acceptors for peptidyl transferase. This Streptococcus pyogenes serotype M28 (strain MGAS6180) protein is Elongation factor P.